Here is a 102-residue protein sequence, read N- to C-terminus: MFAVIKTGGKQYRVEEGQTLKVEKLAVEEGGAIQFDDVLLVCNGDDVKVGAPVVEGAKVTAEVVAHGRGDKVKILKFRRRKHSMKRMGHRQWFTEVKITGIN.

It belongs to the bacterial ribosomal protein bL21 family. In terms of assembly, part of the 50S ribosomal subunit. Contacts protein L20.

In terms of biological role, this protein binds to 23S rRNA in the presence of protein L20. This is Large ribosomal subunit protein bL21 from Marinomonas sp. (strain MWYL1).